Consider the following 798-residue polypeptide: Probable serine/threonine-protein kinase DDB_G0276461 (798 aa).

Residues V54–R324 enclose the Protein kinase domain. ATP-binding positions include V60 to V68 and K82. Residue D185 is the Proton acceptor of the active site. 3 disordered regions span residues G330–F538, T553–N645, and S659–L798. Composition is skewed to low complexity over residues S335–N406, S429–N490, P506–F538, T557–S603, S611–S642, and S659–N678. The span at V679–L697 shows a compositional bias: polar residues. The segment covering N698–N716 has biased composition (low complexity). The span at S717–T769 shows a compositional bias: polar residues. The span at N770 to S790 shows a compositional bias: low complexity.

This sequence belongs to the protein kinase superfamily. Ser/Thr protein kinase family.

It carries out the reaction L-seryl-[protein] + ATP = O-phospho-L-seryl-[protein] + ADP + H(+). It catalyses the reaction L-threonyl-[protein] + ATP = O-phospho-L-threonyl-[protein] + ADP + H(+). The chain is Probable serine/threonine-protein kinase DDB_G0276461 from Dictyostelium discoideum (Social amoeba).